Here is a 177-residue protein sequence, read N- to C-terminus: Large ribosomal subunit protein uL6 (177 aa).

The protein belongs to the universal ribosomal protein uL6 family. In terms of assembly, part of the 50S ribosomal subunit.

In terms of biological role, this protein binds to the 23S rRNA, and is important in its secondary structure. It is located near the subunit interface in the base of the L7/L12 stalk, and near the tRNA binding site of the peptidyltransferase center. In Neisseria meningitidis serogroup C (strain 053442), this protein is Large ribosomal subunit protein uL6.